An 823-amino-acid chain; its full sequence is Valine--tRNA ligase (823 aa).

Positions 52–62 match the 'HIGH' region motif; it reads PTVSGVLHMGH. The 'KMSKS' region signature appears at 549 to 553; it reads KMSKS. Lys-552 provides a ligand contact to ATP.

Belongs to the class-I aminoacyl-tRNA synthetase family. ValS type 2 subfamily. In terms of assembly, monomer.

The protein resides in the cytoplasm. It catalyses the reaction tRNA(Val) + L-valine + ATP = L-valyl-tRNA(Val) + AMP + diphosphate. In terms of biological role, catalyzes the attachment of valine to tRNA(Val). As ValRS can inadvertently accommodate and process structurally similar amino acids such as threonine, to avoid such errors, it has a 'posttransfer' editing activity that hydrolyzes mischarged Thr-tRNA(Val) in a tRNA-dependent manner. This Anaplasma marginale (strain St. Maries) protein is Valine--tRNA ligase.